The chain runs to 238 residues: DNA repair protein RecO (238 aa).

It belongs to the RecO family.

In terms of biological role, involved in DNA repair and RecF pathway recombination. In Aliivibrio salmonicida (strain LFI1238) (Vibrio salmonicida (strain LFI1238)), this protein is DNA repair protein RecO.